A 180-amino-acid polypeptide reads, in one-letter code: ATP synthase subunit delta (180 aa).

It belongs to the ATPase delta chain family. In terms of assembly, F-type ATPases have 2 components, F(1) - the catalytic core - and F(0) - the membrane proton channel. F(1) has five subunits: alpha(3), beta(3), gamma(1), delta(1), epsilon(1). F(0) has three main subunits: a(1), b(2) and c(10-14). The alpha and beta chains form an alternating ring which encloses part of the gamma chain. F(1) is attached to F(0) by a central stalk formed by the gamma and epsilon chains, while a peripheral stalk is formed by the delta and b chains.

Its subcellular location is the cell membrane. Its function is as follows. F(1)F(0) ATP synthase produces ATP from ADP in the presence of a proton or sodium gradient. F-type ATPases consist of two structural domains, F(1) containing the extramembraneous catalytic core and F(0) containing the membrane proton channel, linked together by a central stalk and a peripheral stalk. During catalysis, ATP synthesis in the catalytic domain of F(1) is coupled via a rotary mechanism of the central stalk subunits to proton translocation. In terms of biological role, this protein is part of the stalk that links CF(0) to CF(1). It either transmits conformational changes from CF(0) to CF(1) or is implicated in proton conduction. This Pediococcus pentosaceus (strain ATCC 25745 / CCUG 21536 / LMG 10740 / 183-1w) protein is ATP synthase subunit delta.